Here is a 617-residue protein sequence, read N- to C-terminus: LEAF RUST 10 DISEASE-RESISTANCE LOCUS RECEPTOR-LIKE PROTEIN KINASE-like 2.4 (617 aa).

The first 26 residues, 1–26 (MYYLPSSCLVLFLFFSLFYHLPCASS), serve as a signal peptide directing secretion. Residues 27-243 (KQTLGWCESQ…LPTRLSSEAK (217 aa)) are Extracellular-facing. N-linked (GlcNAc...) asparagine glycans are attached at residues Asn-41, Asn-69, Asn-86, Asn-112, and Asn-184. A helical membrane pass occupies residues 244-264 (IATIAGVSLLPFLVLTLVVHI). The Cytoplasmic portion of the chain corresponds to 265-617 (IRKQKTSNDK…SEENSISSEI (353 aa)). Residues 307–594 (NSFAEVVGRG…ALEVPPRPVL (288 aa)) form the Protein kinase domain. ATP is bound by residues 313 to 321 (VGRGGFGIV) and Lys-335. Tyr-380 is subject to Phosphotyrosine. Asp-431 acts as the Proton acceptor in catalysis. A phosphothreonine mark is found at Thr-468 and Thr-471.

It belongs to the protein kinase superfamily. Ser/Thr protein kinase family.

The protein resides in the membrane. The enzyme catalyses L-seryl-[protein] + ATP = O-phospho-L-seryl-[protein] + ADP + H(+). The catalysed reaction is L-threonyl-[protein] + ATP = O-phospho-L-threonyl-[protein] + ADP + H(+). In Arabidopsis thaliana (Mouse-ear cress), this protein is LEAF RUST 10 DISEASE-RESISTANCE LOCUS RECEPTOR-LIKE PROTEIN KINASE-like 2.4.